The following is a 413-amino-acid chain: uncharacterized protein (413 aa).

This sequence belongs to the mycobacterial PPE family.

This is an uncharacterized protein from Mycobacterium tuberculosis (strain CDC 1551 / Oshkosh).